A 1909-amino-acid polypeptide reads, in one-letter code: Nck-associated protein 5 (1909 aa).

Positions 71-253 form a coiled coil; sequence EKLIHELEEE…DLEQQNRTLS (183 aa). Disordered regions lie at residues 351-370, 736-819, 855-997, 1026-1469, 1486-1509, 1541-1592, 1725-1750, and 1763-1885; these read SSYT…SQNW, EEDT…LMEP, PLFE…KKPS, SSSF…APLS, KGQV…FASW, GFGN…RTPQ, FPLP…DAEP, and SMRA…DYGD. The span at 736–748 shows a compositional bias: basic and acidic residues; the sequence is EEDTEKNIPKDNV. Polar residues-rich tracts occupy residues 753 to 789, 950 to 965, 981 to 990, and 1066 to 1084; these read RVST…SRSS, APSS…SETA, VISSNPATTE, and PRIS…SKSV. 2 stretches are compositionally biased toward low complexity: residues 1110–1131 and 1178–1187; these read SPSS…HNSP and ASKSSVAVNK. Positions 1241-1250 are enriched in basic and acidic residues; it reads DGRDGVDNRS. Positions 1300–1325 are enriched in polar residues; it reads QIITNTAERGNSLTRQNSSTESSPNK. A compositionally biased stretch (low complexity) spans 1339–1366; it reads GRPSGHPSSGKGSLGSSGSFSSQHGSPS. The segment covering 1428 to 1446 has biased composition (polar residues); that stretch reads PGRTQHPSTFETSSTSKLE. Over residues 1454–1466 the composition is skewed to low complexity; that stretch reads ASATATDAVSSEA. 2 stretches are compositionally biased toward basic and acidic residues: residues 1547–1560 and 1567–1576; these read LKSE…KPEL and ELIKDTKSAD. Positions 1869 to 1878 are enriched in polar residues; sequence YSASGGSNSD.

As to quaternary structure, interacts with the SH3-containing region of the adapter protein NCK. As to expression, expressed in fetal and adult brain, leukocytes and fetal fibroblasts.

This is Nck-associated protein 5 (NCKAP5) from Homo sapiens (Human).